A 500-amino-acid chain; its full sequence is Cytochrome P450 monooxygenase ausR (500 aa).

Residues 15–35 (GVGLYILWTVAVLFVIFKLLA) form a helical membrane-spanning segment. Residue Cys439 participates in heme binding.

This sequence belongs to the cytochrome P450 family. Requires heme as cofactor.

Its subcellular location is the membrane. The protein operates within secondary metabolite biosynthesis; terpenoid biosynthesis. Functionally, cytochrome P450 monooxygenase; part of the gene cluster that mediates the biosynthesis of calidodehydroaustin, a fungal meroterpenoid. The first step of the pathway is the synthesis of 3,5-dimethylorsellinic acid by the polyketide synthase ausA. 3,5-dimethylorsellinic acid is then prenylated by the polyprenyl transferase ausN. Further epoxidation by the FAD-dependent monooxygenase ausM and cyclization by the probable terpene cyclase ausL lead to the formation of protoaustinoid A. Protoaustinoid A is then oxidized to spiro-lactone preaustinoid A3 by the combined action of the FAD-binding monooxygenases ausB and ausC, and the dioxygenase ausE. Acid-catalyzed keto-rearrangement and ring contraction of the tetraketide portion of preaustinoid A3 by ausJ lead to the formation of preaustinoid A4. The aldo-keto reductase ausK, with the help of ausH, is involved in the next step by transforming preaustinoid A4 into isoaustinone which is in turn hydroxylated by the P450 monooxygenase ausI to form austinolide. The cytochrome P450 monooxygenase ausG modifies austinolide to austinol. Austinol is further acetylated to austin by the O-acetyltransferase ausP, which spontaneously changes to dehydroaustin. The cytochrome P450 monooxygenase ausR then converts dehydroaustin is into 7-dehydrodehydroaustin. The hydroxylation catalyzed by ausR permits the O-acetyltransferase ausQ to add an additional acetyl group to the molecule, leading to the formation of acetoxydehydroaustin. The short chain dehydrogenase ausT catalyzes the reduction of the double bond present between carbon atoms 1 and 2 to convert 7-dehydrodehydroaustin into 1,2-dihydro-7-hydroxydehydroaustin. AusQ catalyzes not only an acetylation reaction but also the addition of the PKS ausV diketide product to 1,2-dihydro-7-hydroxydehydroaustin, forming precalidodehydroaustin. Finally, the iron/alpha-ketoglutarate-dependent dioxygenase converts precalidodehydroaustin into calidodehydroaustin. The polypeptide is Cytochrome P450 monooxygenase ausR (Aspergillus calidoustus).